An 880-amino-acid chain; its full sequence is Tyrosine-protein kinase receptor TYRO3 (880 aa).

Residues methionine 1–alanine 30 form the signal peptide. Ig-like C2-type domains follow at residues alanine 31–serine 118 and proline 129–valine 209. The Extracellular segment spans residues alanine 31–tryptophan 419. N-linked (GlcNAc...) asparagine glycosylation is found at asparagine 53, asparagine 75, asparagine 181, asparagine 220, asparagine 230, asparagine 283, asparagine 356, and asparagine 370. 2 cysteine pairs are disulfide-bonded: cysteine 54–cysteine 107 and cysteine 150–cysteine 193. Fibronectin type-III domains are found at residues alanine 217 to leucine 310 and alanine 315 to histidine 406. The helical transmembrane segment at valine 420–leucine 440 threads the bilayer. Topologically, residues leucine 441 to cysteine 880 are cytoplasmic. Serine 456 is modified (phosphoserine). Residues phenylalanine 508–valine 785 form the Protein kinase domain. ATP is bound by residues leucine 514–valine 522 and lysine 540. The active-site Proton acceptor is aspartate 645. Phosphotyrosine; by autocatalysis is present on residues tyrosine 671, tyrosine 675, tyrosine 676, and tyrosine 794. The disordered stretch occupies residues alanine 800–asparagine 864. Phosphoserine is present on residues serine 808 and serine 859. The segment covering serine 849 to asparagine 864 has biased composition (polar residues).

Belongs to the protein kinase superfamily. Tyr protein kinase family. AXL/UFO subfamily. As to quaternary structure, monomer and homodimer. Interacts (via N-terminus) with extracellular ligands TULP1 and GAS6. Interacts with PIK3R1; this interaction increases PI3-kinase activity. In terms of processing, autophosphorylated. Abundant in the brain and lower levels in other tissues.

The protein resides in the cell membrane. The enzyme catalyses L-tyrosyl-[protein] + ATP = O-phospho-L-tyrosyl-[protein] + ADP + H(+). Its function is as follows. Receptor tyrosine kinase that transduces signals from the extracellular matrix into the cytoplasm by binding to several ligands including TULP1 or GAS6. Regulates many physiological processes including cell survival, migration and differentiation. Ligand binding at the cell surface induces dimerization and autophosphorylation of TYRO3 on its intracellular domain that provides docking sites for downstream signaling molecules. Following activation by ligand, interacts with PIK3R1 and thereby enhances PI3-kinase activity. Activates the AKT survival pathway, including nuclear translocation of NF-kappa-B and up-regulation of transcription of NF-kappa-B-regulated genes. TYRO3 signaling plays a role in various processes such as neuron protection from excitotoxic injury, platelet aggregation and cytoskeleton reorganization. Also plays an important role in inhibition of Toll-like receptors (TLRs)-mediated innate immune response by activating STAT1, which selectively induces production of suppressors of cytokine signaling SOCS1 and SOCS3. This is Tyrosine-protein kinase receptor TYRO3 (Tyro3) from Mus musculus (Mouse).